The chain runs to 407 residues: D-galactonate dehydratase family member Pjdr2_1176 (407 aa).

Aspartate 208 provides a ligand contact to Mg(2+). Histidine 210 is a D-arabinonate binding site. 2 residues coordinate Mg(2+): glutamate 234 and glutamate 260. D-arabinonate-binding residues include glutamate 260, arginine 281, and glutamate 337.

This sequence belongs to the mandelate racemase/muconate lactonizing enzyme family. GalD subfamily.

Its function is as follows. Has no detectable activity with D-mannonate and with a panel of 70 other acid sugars (in vitro), in spite of the conservation of the residues that are expected to be important for catalytic activity and cofactor binding. May have evolved a divergent function. This Paenibacillus sp. (strain JDR-2) protein is D-galactonate dehydratase family member Pjdr2_1176.